We begin with the raw amino-acid sequence, 354 residues long: Tribbles homolog 3 (354 aa).

The interaction with DDIT3/CHOP stretch occupies residues 1–127; sequence MRATPLAASA…QHVARPTEVL (127 aa). The tract at residues 36-61 is disordered; it reads RDEPEPGPLPSLLPPSPPPASDLSPA. The span at 41–55 shows a compositional bias: pro residues; the sequence is PGPLPSLLPPSPPPA. The 248-residue stretch at 68-315 folds into the Protein kinase domain; the sequence is LGPYILLERE…ALGILLHPWL (248 aa). A compositionally biased stretch (basic and acidic residues) spans 320 to 333; that stretch reads GRVSPPQSDRREMD. Residues 320-354 form a disordered region; that stretch reads GRVSPPQSDRREMDQVVPDGPQLEEAEEGEVGLYG. Over residues 341–354 the composition is skewed to acidic residues; sequence QLEEAEEGEVGLYG.

The protein belongs to the protein kinase superfamily. CAMK Ser/Thr protein kinase family. Tribbles subfamily. In terms of assembly, interacts with AKT1, AKT2, MAP2K1 and MAP2K7. Interacts with ATF4. Interacts with DDIT3/CHOP and inhibits its interaction with EP300/P300. Interacts with APOBEC3C. Interacts (via N-terminus) with APOBEC3A. Interacts with RELA. As to expression, highly expressed in liver. Not detected in heart, brain, spleen, lung, skeletal muscle, kidney or testis.

The protein resides in the nucleus. Inactive protein kinase which acts as a regulator of the integrated stress response (ISR), a process for adaptation to various stress. Inhibits the transcriptional activity of DDIT3/CHOP and is involved in DDIT3/CHOP-dependent cell death during ER stress. May play a role in programmed neuronal cell death but does not appear to affect non-neuronal cells. Acts as a negative feedback regulator of the ATF4-dependent transcription during the ISR: while TRIB3 expression is promoted by ATF4, TRIB3 protein interacts with ATF4 and inhibits ATF4 transcription activity. Disrupts insulin signaling by binding directly to Akt kinases and blocking their activation. May bind directly to and mask the 'Thr-308' phosphorylation site in AKT1. Interacts with the NF-kappa-B transactivator p65 RELA and inhibits its phosphorylation and thus its transcriptional activation activity. Interacts with MAPK kinases and regulates activation of MAP kinases. Can inhibit APOBEC3A editing of nuclear DNA. In Mus musculus (Mouse), this protein is Tribbles homolog 3 (Trib3).